Consider the following 265-residue polypeptide: Triosephosphate isomerase (265 aa).

13 to 15 (NWK) lines the substrate pocket. The active-site Electrophile is the His-106. Residue Glu-179 is the Proton acceptor of the active site. Substrate-binding positions include Gly-185, Ser-223, and 244 to 245 (GG).

It belongs to the triosephosphate isomerase family. Homodimer.

The protein resides in the cytoplasm. It carries out the reaction D-glyceraldehyde 3-phosphate = dihydroxyacetone phosphate. The protein operates within carbohydrate biosynthesis; gluconeogenesis. It participates in carbohydrate degradation; glycolysis; D-glyceraldehyde 3-phosphate from glycerone phosphate: step 1/1. In terms of biological role, involved in the gluconeogenesis. Catalyzes stereospecifically the conversion of dihydroxyacetone phosphate (DHAP) to D-glyceraldehyde-3-phosphate (G3P). The polypeptide is Triosephosphate isomerase (Acinetobacter baylyi (strain ATCC 33305 / BD413 / ADP1)).